Here is a 255-residue protein sequence, read N- to C-terminus: 4-hydroxy-tetrahydrodipicolinate reductase (255 aa).

Residues 13-18 (GCNGKM), 90-92 (CTT), and 114-117 (SANM) each bind NAD(+). The active-site Proton donor/acceptor is His-147. A (S)-2,3,4,5-tetrahydrodipicolinate-binding site is contributed by His-148. Residue Lys-151 is the Proton donor of the active site. 157–158 (GT) contributes to the (S)-2,3,4,5-tetrahydrodipicolinate binding site.

This sequence belongs to the DapB family.

It is found in the cytoplasm. It carries out the reaction (S)-2,3,4,5-tetrahydrodipicolinate + NAD(+) + H2O = (2S,4S)-4-hydroxy-2,3,4,5-tetrahydrodipicolinate + NADH + H(+). The catalysed reaction is (S)-2,3,4,5-tetrahydrodipicolinate + NADP(+) + H2O = (2S,4S)-4-hydroxy-2,3,4,5-tetrahydrodipicolinate + NADPH + H(+). It participates in amino-acid biosynthesis; L-lysine biosynthesis via DAP pathway; (S)-tetrahydrodipicolinate from L-aspartate: step 4/4. Catalyzes the conversion of 4-hydroxy-tetrahydrodipicolinate (HTPA) to tetrahydrodipicolinate. The sequence is that of 4-hydroxy-tetrahydrodipicolinate reductase from Clostridium tetani (strain Massachusetts / E88).